The primary structure comprises 1906 residues: A disintegrin and metalloproteinase with thrombospondin motifs 20 (1906 aa).

Positions 1–26 (MRVAKWLTGLLCPISLLLTGSWEVRF) are cleaved as a signal peptide. A propeptide spanning residues 27–249 (HPRQEALVKT…RSQLHSRNKR (223 aa)) is cleaved from the precursor. N92 and N221 each carry an N-linked (GlcNAc...) asparagine glycan. Positions 201–222 (PCEVSENQMEKTALPSQSSRNT) are disordered. In terms of domain architecture, Peptidase M12B spans 255–464 (RYVEVMVTAD…GHGECLLDKP (210 aa)). Disulfide bonds link C330–C383, C359–C365, C377–C459, C415–C443, C486–C508, C497–C518, C503–C537, C531–C542, C565–C602, C569–C607, and C580–C592. H399 contributes to the Zn(2+) binding site. Residue E400 is part of the active site. The Zn(2+) site is built by H403 and H409. Positions 465-552 (NGRTYDLSPQ…VTRDMETRPV (88 aa)) constitute a Disintegrin domain. In terms of domain architecture, TSP type-1 1 spans 553-608 (DGEWGPWGPYSSCSRTCGGGIKSTARLCDRPEPRNGGRYCVGRRMKFRSCNTDSCP). Residues N714, N798, and N805 are each glycosylated (N-linked (GlcNAc...) asparagine). The tract at residues 721-842 (AGVFNSAHYG…FNIPIEERSN (122 aa)) is spacer. 7 consecutive TSP type-1 domains span residues 843–901 (LFSW…MDCE), 906–962 (IIGK…GSCV), 962–1015 (VLTR…NCNE), 1017–1074 (PCPS…RACA), 1075–1131 (SWHV…APCL), 1148–1202 (RAAQ…LCFS), and 1203–1260 (PCGE…AACP). An N-linked (GlcNAc...) asparagine glycan is attached at N1057. Residues 1265 to 1295 (RAPSSSEQPSHVPSRNVPLTHKPGENQDQGA) form a disordered region. Polar residues predominate over residues 1266 to 1277 (APSSSEQPSHVP). TSP type-1 domains lie at 1300–1351 (RGNQ…RHCG), 1354–1411 (PCPH…HACP), 1412–1465 (EDVS…KACR), 1468–1526 (RCPS…QDCM), 1527–1584 (RYQW…PHCK), 1585–1648 (YSVV…LRSC), and 1650–1706 (HVAT…NDCK). A glycan (N-linked (GlcNAc...) asparagine) is linked at N1562. The 200-residue stretch at 1707–1906 (LLTTCKELQV…MATGLSIQVL (200 aa)) folds into the GON domain. N1719, N1759, and N1777 each carry an N-linked (GlcNAc...) asparagine glycan.

Zn(2+) serves as cofactor. Post-translationally, the precursor is cleaved by a furin endopeptidase. Glycosylated. Can be O-fucosylated by POFUT2 on a serine or a threonine residue found within the consensus sequence C1-X(2)-(S/T)-C2-G of the TSP type-1 repeat domains where C1 and C2 are the first and second cysteine residue of the repeat, respectively. Fucosylated repeats can then be further glycosylated by the addition of a beta-1,3-glucose residue by the glucosyltransferase, B3GALTL. Fucosylation mediates the efficient secretion of ADAMTS family members. Can also be C-glycosylated with one or two mannose molecules on tryptophan residues within the consensus sequence W-X-X-W of the TPRs, and N-glycosylated. These other glycosylations can also facilitate secretion. In terms of tissue distribution, expressed at low level in testis and brain.

It localises to the secreted. The protein localises to the extracellular space. The protein resides in the extracellular matrix. May play a role in tissue-remodeling process occurring in both normal and pathological conditions. May have a protease-independent function in the transport from the endoplasmic reticulum to the Golgi apparatus of secretory cargos, mediated by the GON domain. This chain is A disintegrin and metalloproteinase with thrombospondin motifs 20 (Adamts20), found in Mus musculus (Mouse).